The sequence spans 184 residues: Probable RNA 2'-phosphotransferase (184 aa).

It belongs to the KptA/TPT1 family.

In terms of biological role, removes the 2'-phosphate from RNA via an intermediate in which the phosphate is ADP-ribosylated by NAD followed by a presumed transesterification to release the RNA and generate ADP-ribose 1''-2''-cyclic phosphate (APPR&gt;P). May function as an ADP-ribosylase. The sequence is that of Probable RNA 2'-phosphotransferase from Shigella boydii serotype 18 (strain CDC 3083-94 / BS512).